A 1408-amino-acid chain; its full sequence is DNA-directed RNA polymerase subunit beta' (1408 aa).

Zn(2+) contacts are provided by cysteine 70, cysteine 72, cysteine 85, and cysteine 88. Residues aspartate 460, aspartate 462, and aspartate 464 each coordinate Mg(2+). The Zn(2+) site is built by cysteine 814, cysteine 887, cysteine 894, and cysteine 897.

This sequence belongs to the RNA polymerase beta' chain family. In terms of assembly, the RNAP catalytic core consists of 2 alpha, 1 beta, 1 beta' and 1 omega subunit. When a sigma factor is associated with the core the holoenzyme is formed, which can initiate transcription. Mg(2+) is required as a cofactor. It depends on Zn(2+) as a cofactor.

The enzyme catalyses RNA(n) + a ribonucleoside 5'-triphosphate = RNA(n+1) + diphosphate. Its function is as follows. DNA-dependent RNA polymerase catalyzes the transcription of DNA into RNA using the four ribonucleoside triphosphates as substrates. This chain is DNA-directed RNA polymerase subunit beta', found in Hydrogenovibrio crunogenus (strain DSM 25203 / XCL-2) (Thiomicrospira crunogena).